Reading from the N-terminus, the 245-residue chain is 4-hydroxy-tetrahydrodipicolinate reductase (245 aa).

NAD(+)-binding positions include 7 to 12 (GARGKV), 75 to 77 (GTT), and 102 to 105 (APNF). The active-site Proton donor/acceptor is His132. Residue His133 coordinates (S)-2,3,4,5-tetrahydrodipicolinate. The Proton donor role is filled by Lys136. 142–143 (GT) contributes to the (S)-2,3,4,5-tetrahydrodipicolinate binding site.

Belongs to the DapB family.

Its subcellular location is the cytoplasm. It catalyses the reaction (S)-2,3,4,5-tetrahydrodipicolinate + NAD(+) + H2O = (2S,4S)-4-hydroxy-2,3,4,5-tetrahydrodipicolinate + NADH + H(+). It carries out the reaction (S)-2,3,4,5-tetrahydrodipicolinate + NADP(+) + H2O = (2S,4S)-4-hydroxy-2,3,4,5-tetrahydrodipicolinate + NADPH + H(+). Its pathway is amino-acid biosynthesis; L-lysine biosynthesis via DAP pathway; (S)-tetrahydrodipicolinate from L-aspartate: step 4/4. Its function is as follows. Catalyzes the conversion of 4-hydroxy-tetrahydrodipicolinate (HTPA) to tetrahydrodipicolinate. This is 4-hydroxy-tetrahydrodipicolinate reductase from Mycolicibacterium smegmatis (strain ATCC 700084 / mc(2)155) (Mycobacterium smegmatis).